The chain runs to 475 residues: Ribulose bisphosphate carboxylase large chain (475 aa).

A propeptide spanning residues 1–2 (MS) is cleaved from the precursor. Proline 3 is modified (N-acetylproline). Lysine 14 is modified (N6,N6,N6-trimethyllysine). Residues asparagine 123 and threonine 173 each contribute to the substrate site. Lysine 175 functions as the Proton acceptor in the catalytic mechanism. A substrate-binding site is contributed by lysine 177. Mg(2+) contacts are provided by lysine 201, aspartate 203, and glutamate 204. Lysine 201 carries the N6-carboxylysine modification. Histidine 294 acts as the Proton acceptor in catalysis. The substrate site is built by arginine 295, histidine 327, and serine 379.

This sequence belongs to the RuBisCO large chain family. Type I subfamily. As to quaternary structure, heterohexadecamer of 8 large chains and 8 small chains; disulfide-linked. The disulfide link is formed within the large subunit homodimers. Mg(2+) serves as cofactor. In terms of processing, the disulfide bond which can form in the large chain dimeric partners within the hexadecamer appears to be associated with oxidative stress and protein turnover.

It localises to the plastid. The protein localises to the chloroplast. It catalyses the reaction 2 (2R)-3-phosphoglycerate + 2 H(+) = D-ribulose 1,5-bisphosphate + CO2 + H2O. The enzyme catalyses D-ribulose 1,5-bisphosphate + O2 = 2-phosphoglycolate + (2R)-3-phosphoglycerate + 2 H(+). Functionally, ruBisCO catalyzes two reactions: the carboxylation of D-ribulose 1,5-bisphosphate, the primary event in carbon dioxide fixation, as well as the oxidative fragmentation of the pentose substrate in the photorespiration process. Both reactions occur simultaneously and in competition at the same active site. The sequence is that of Ribulose bisphosphate carboxylase large chain from Illicium oligandrum (Star anise).